The sequence spans 103 residues: Pyrimidine/purine nucleoside phosphorylase (103 aa).

It belongs to the nucleoside phosphorylase PpnP family.

It catalyses the reaction a purine D-ribonucleoside + phosphate = a purine nucleobase + alpha-D-ribose 1-phosphate. It carries out the reaction adenosine + phosphate = alpha-D-ribose 1-phosphate + adenine. The catalysed reaction is cytidine + phosphate = cytosine + alpha-D-ribose 1-phosphate. The enzyme catalyses guanosine + phosphate = alpha-D-ribose 1-phosphate + guanine. It catalyses the reaction inosine + phosphate = alpha-D-ribose 1-phosphate + hypoxanthine. It carries out the reaction thymidine + phosphate = 2-deoxy-alpha-D-ribose 1-phosphate + thymine. The catalysed reaction is uridine + phosphate = alpha-D-ribose 1-phosphate + uracil. The enzyme catalyses xanthosine + phosphate = alpha-D-ribose 1-phosphate + xanthine. In terms of biological role, catalyzes the phosphorolysis of diverse nucleosides, yielding D-ribose 1-phosphate and the respective free bases. Can use uridine, adenosine, guanosine, cytidine, thymidine, inosine and xanthosine as substrates. Also catalyzes the reverse reactions. The sequence is that of Pyrimidine/purine nucleoside phosphorylase from Cupriavidus metallidurans (strain ATCC 43123 / DSM 2839 / NBRC 102507 / CH34) (Ralstonia metallidurans).